We begin with the raw amino-acid sequence, 701 residues long: Polyribonucleotide nucleotidyltransferase (701 aa).

Mg(2+)-binding residues include Asp-489 and Asp-495. The KH domain maps to 556 to 615 (PRIHTMKIHPDKIREVIGSGGKVIRSITEETGCAIDIEDDGTIRIASSDQASAEQAVKII). Positions 625-693 (GQVYEGKVVR…RQGRVKLTMK (69 aa)) constitute an S1 motif domain.

The protein belongs to the polyribonucleotide nucleotidyltransferase family. Requires Mg(2+) as cofactor.

Its subcellular location is the cytoplasm. It carries out the reaction RNA(n+1) + phosphate = RNA(n) + a ribonucleoside 5'-diphosphate. In terms of biological role, involved in mRNA degradation. Catalyzes the phosphorolysis of single-stranded polyribonucleotides processively in the 3'- to 5'-direction. The sequence is that of Polyribonucleotide nucleotidyltransferase from Magnetococcus marinus (strain ATCC BAA-1437 / JCM 17883 / MC-1).